We begin with the raw amino-acid sequence, 647 residues long: LIM domain kinase 1 (647 aa).

LIM zinc-binding domains lie at 25 to 75 (CASC…CKKD) and 84 to 137 (CHGC…CGQC). In terms of domain architecture, PDZ spans 165-258 (LVSIPASAHG…LLQLTLEHDP (94 aa)). Position 210 is a phosphoserine (S210). T229 carries the phosphothreonine modification. Positions 256-316 (HDPHDSLGHG…SLVSPASQRK (61 aa)) are disordered. The segment covering 278-289 (HTPSGQAGSSAR) has biased composition (polar residues). Residues S298, S302, S307, and S310 each carry the phosphoserine modification. Position 323 is a phosphoserine; by MAPKAPK2 (S323). The residue at position 337 (S337) is a Phosphoserine. The 266-residue stretch at 339-604 (LIHGEVLGKG…PSFVKLEQWL (266 aa)) folds into the Protein kinase domain. Residues 345–353 (LGKGCFGQA) and K368 contribute to the ATP site. D460 is an active-site residue. T508 carries the phosphothreonine; by ROCK1 and PAK1 modification.

The protein belongs to the protein kinase superfamily. TKL Ser/Thr protein kinase family. In terms of assembly, interacts (via LIM domain) with the cytoplasmic domain of NRG1. Interacts with NISCH. Interacts with RLIM and RNF6. Self-associates to form homodimers. Interacts with HSP90AA1; this interaction promotes LIMK1 dimerization and subsequent transphosphorylation. Interacts with CDKN1C. Interacts with SSH1. Interacts with ROCK1. Interacts (via LIM zinc-binding domains) with FAM89B/LRAP25 (via LRR repeat). Forms a tripartite complex with CDC42BPA, CDC42BPB and FAM89B/LRAP25. Post-translationally, autophosphorylated. Phosphorylated on Thr-508 by ROCK1 and PAK1, resulting in activation. Phosphorylated by PAK4 which increases the ability of LIMK1 to phosphorylate cofilin. Phosphorylated at Ser-323 by MAPKAPK2 during activation of VEGFA-induced signaling, which results in activation of LIMK1 and promotion of actin reorganization, cell migration, and tubule formation of endothelial cells. Dephosphorylated and inactivated by SSH1. Phosphorylated by CDC42BP. In terms of processing, ubiquitinated. 'Lys-48'-linked polyubiquitination by RNF6 leads to proteasomal degradation through the 26S proteasome, modulating LIMK1 levels in the growth cone and its effect on axonal outgrowth. Also polyubiquitinated by RLIM.

The protein localises to the cytoplasm. It is found in the nucleus. The protein resides in the cytoskeleton. Its subcellular location is the cell projection. It localises to the lamellipodium. The catalysed reaction is L-seryl-[protein] + ATP = O-phospho-L-seryl-[protein] + ADP + H(+). It catalyses the reaction L-threonyl-[protein] + ATP = O-phospho-L-threonyl-[protein] + ADP + H(+). Its function is as follows. Serine/threonine-protein kinase that plays an essential role in the regulation of actin filament dynamics. Acts downstream of several Rho family GTPase signal transduction pathways. Activated by upstream kinases including ROCK1, PAK1 and PAK4, which phosphorylate LIMK1 on a threonine residue located in its activation loop. LIMK1 subsequently phosphorylates and inactivates the actin binding/depolymerizing factors cofilin-1/CFL1, cofilin-2/CFL2 and destrin/DSTN, thereby preventing the cleavage of filamentous actin (F-actin), and stabilizing the actin cytoskeleton. In this way LIMK1 regulates several actin-dependent biological processes including cell motility, cell cycle progression, and differentiation. Phosphorylates TPPP on serine residues, thereby promoting microtubule disassembly. Stimulates axonal outgrowth and may be involved in brain development. The chain is LIM domain kinase 1 (Limk1) from Rattus norvegicus (Rat).